Consider the following 56-residue polypeptide: UPF0391 membrane protein Rru_A0119 (56 aa).

The next 2 membrane-spanning stretches (helical) occupy residues 4–24 and 30–50; these read WALIFLVVAVVAALFGFGGIA and IAQILFFVFLVLLVISLIMHF.

It belongs to the UPF0391 family.

The protein resides in the cell membrane. This Rhodospirillum rubrum (strain ATCC 11170 / ATH 1.1.1 / DSM 467 / LMG 4362 / NCIMB 8255 / S1) protein is UPF0391 membrane protein Rru_A0119.